Consider the following 193-residue polypeptide: Ancillary SecYEG translocon subunit (193 aa).

The Cytoplasmic portion of the chain corresponds to 1 to 11 (MIKNSYINEKL). A helical membrane pass occupies residues 12 to 34 (NFYQKSFLTCMLLIVIVIVYFFS). At 35 to 193 (KNYLDKPKNS…IIQMKINNYN (159 aa)) the chain is on the extracellular side.

This sequence belongs to the YfgM family. In terms of assembly, interacts with the Sec translocon. Forms a complex with PpiD.

It is found in the cell membrane. In terms of biological role, may mediate protein transfer from the Sec translocon to the chaperone network via its extracellular C-terminal region. This Buchnera aphidicola subsp. Baizongia pistaciae (strain Bp) protein is Ancillary SecYEG translocon subunit.